A 503-amino-acid polypeptide reads, in one-letter code: Maturase K (503 aa).

Belongs to the intron maturase 2 family. MatK subfamily.

The protein localises to the plastid. Its subcellular location is the chloroplast. Its function is as follows. Usually encoded in the trnK tRNA gene intron. Probably assists in splicing its own and other chloroplast group II introns. The polypeptide is Maturase K (Psilotum nudum (Whisk fern)).